We begin with the raw amino-acid sequence, 497 residues long: Intermediate filament protein A (497 aa).

The segment at 1–32 (MSDLNDRLASYIEKVRFLEAQNRKLAADLDLL) is coil 1A. The IF rod domain occupies 1–342 (MSDLNDRLAS…KMLEGEENRA (342 aa)). The linker 1 stretch occupies residues 33–46 (RGRWGKDTLSVRAM). Positions 47-184 (YEGELQEARK…RVHDQEIAEL (138 aa)) are coil 1B. Residues 185–202 (QAMASRDTTPENREYFKN) form a linker 12 region. A coil 2 region spans residues 203 to 342 (ELASAIRDIR…KMLEGEENRA (140 aa)). The tract at residues 343–497 (GLRQLVEQVV…THIQRSSHTI (155 aa)) is tail. In terms of domain architecture, LTD spans 375 to 493 (SRTSFQRSAK…EERATHIQRS (119 aa)).

It belongs to the intermediate filament family. As to quaternary structure, a and B can form homopolymers. Giant body muscle cells.

The protein resides in the cytoplasm. In Ascaris suum (Pig roundworm), this protein is Intermediate filament protein A.